A 372-amino-acid chain; its full sequence is Integral membrane protein GPR137B (372 aa).

Residues 1-32 (MESPAWDATKNDSLPPTLTPAVPPYVKLGLTT) lie on the Lumenal side of the membrane. Residue Asn11 is glycosylated (N-linked (GlcNAc...) asparagine). Residues 33–53 (VYTIFYLLLFAFVYVQLWLVL) form a helical membrane-spanning segment. At 54 to 64 (HYKHKRFSYQT) the chain is on the cytoplasmic side. A helical membrane pass occupies residues 65-85 (VFLFLCLLWASLRAVLFSFYF). Over 86–93 (RNFVEANR) the chain is Lumenal. The chain crosses the membrane as a helical span at residues 94-114 (LGAFTFWLLYCFPVCLQFFTL). Topologically, residues 115–144 (TLMNLYFARVIYKAKSKYLPELIKYRLPLY) are cytoplasmic. A helical membrane pass occupies residues 145 to 165 (LAFLVISLLFLVVNLTCAILV). Residues 166 to 173 (KTDYAETK) lie on the Lumenal side of the membrane. Residues 174-194 (VIVSIRVAINDTLFVLCAVSL) traverse the membrane as a helical segment. Residues 195–222 (SVCLYKISKMSLAGVYLESKGSSVCQVT) are Cytoplasmic-facing. Residues 223-243 (CIGVTVILLYTSRACYNLVVL) form a helical membrane-spanning segment. The Lumenal segment spans residues 244 to 276 (SLSDSRYSSFDYDWYNVSDQADLKCKLGDAGYV). N-linked (GlcNAc...) asparagine glycosylation occurs at Asn259. The chain crosses the membrane as a helical span at residues 277-297 (VFGIILFIWELFPTSLVVYFF). Over 298–372 (RVRNSAQDMT…QTGSLQRDST (75 aa)) the chain is Cytoplasmic.

It belongs to the GPR137 family.

The protein resides in the lysosome membrane. Functionally, lysosomal integral membrane protein that regulates the localization and activity of mTORC1, a signaling complex promoting cell growth in response to growth factors, energy levels, and amino acids. Interacts with Rag GTPases and increases the lysosomial localization and activity of Rag GTPases and thereby regulates mTORC1 translocation and activity in lysosome. Involved in the regulation of lysosomal morphology and autophagy. Also acts as a negative regulator of osteoclast activity. Also acts as a negative regulator of osteoclast activity. This Xenopus laevis (African clawed frog) protein is Integral membrane protein GPR137B (gpr137b).